The sequence spans 119 residues: Ribonuclease P protein component (119 aa).

The protein belongs to the RnpA family. In terms of assembly, consists of a catalytic RNA component (M1 or rnpB) and a protein subunit.

The enzyme catalyses Endonucleolytic cleavage of RNA, removing 5'-extranucleotides from tRNA precursor.. In terms of biological role, RNaseP catalyzes the removal of the 5'-leader sequence from pre-tRNA to produce the mature 5'-terminus. It can also cleave other RNA substrates such as 4.5S RNA. The protein component plays an auxiliary but essential role in vivo by binding to the 5'-leader sequence and broadening the substrate specificity of the ribozyme. The chain is Ribonuclease P protein component from Clostridium acetobutylicum (strain ATCC 824 / DSM 792 / JCM 1419 / IAM 19013 / LMG 5710 / NBRC 13948 / NRRL B-527 / VKM B-1787 / 2291 / W).